The following is a 694-amino-acid chain: 4-alpha-glucanotransferase (694 aa).

This sequence belongs to the disproportionating enzyme family.

It localises to the cytoplasm. It carries out the reaction Transfers a segment of a (1-&gt;4)-alpha-D-glucan to a new position in an acceptor, which may be glucose or a (1-&gt;4)-alpha-D-glucan.. The chain is 4-alpha-glucanotransferase (malQ) from Escherichia coli (strain K12).